A 186-amino-acid chain; its full sequence is HGPRTase-like protein 3 (186 aa).

It belongs to the purine/pyrimidine phosphoribosyltransferase family. Archaeal HPRT subfamily.

May catalyze a purine salvage reaction, the substrate is unknown. This is HGPRTase-like protein 3 from Haloterrigena turkmenica (strain ATCC 51198 / DSM 5511 / JCM 9101 / NCIMB 13204 / VKM B-1734 / 4k) (Halococcus turkmenicus).